Here is a 242-residue protein sequence, read N- to C-terminus: Small ribosomal subunit protein uS2 (242 aa).

The protein belongs to the universal ribosomal protein uS2 family.

The chain is Small ribosomal subunit protein uS2 from Tolumonas auensis (strain DSM 9187 / NBRC 110442 / TA 4).